A 380-amino-acid polypeptide reads, in one-letter code: 1-deoxy-D-xylulose 5-phosphate reductoisomerase 2 (380 aa).

8 residues coordinate NADPH: serine 10, glycine 11, serine 12, isoleucine 13, glycine 36, lysine 37, asparagine 38, and asparagine 120. Lysine 121 is a 1-deoxy-D-xylulose 5-phosphate binding site. Residue glutamate 122 participates in NADPH binding. A Mn(2+)-binding site is contributed by aspartate 146. 4 residues coordinate 1-deoxy-D-xylulose 5-phosphate: serine 147, glutamate 148, serine 172, and histidine 195. Position 148 (glutamate 148) interacts with Mn(2+). NADPH is bound at residue glycine 201. 1-deoxy-D-xylulose 5-phosphate contacts are provided by serine 208, asparagine 213, lysine 214, and glutamate 217. Glutamate 217 serves as a coordination point for Mn(2+).

It belongs to the DXR family. It depends on Mg(2+) as a cofactor. Requires Mn(2+) as cofactor.

The catalysed reaction is 2-C-methyl-D-erythritol 4-phosphate + NADP(+) = 1-deoxy-D-xylulose 5-phosphate + NADPH + H(+). It participates in isoprenoid biosynthesis; isopentenyl diphosphate biosynthesis via DXP pathway; isopentenyl diphosphate from 1-deoxy-D-xylulose 5-phosphate: step 1/6. Functionally, catalyzes the NADPH-dependent rearrangement and reduction of 1-deoxy-D-xylulose-5-phosphate (DXP) to 2-C-methyl-D-erythritol 4-phosphate (MEP). This Bacillus anthracis protein is 1-deoxy-D-xylulose 5-phosphate reductoisomerase 2.